Reading from the N-terminus, the 435-residue chain is Nuclear hormone receptor family member nhr-136 (435 aa).

Positions 50–129 (PSNCKVCRHS…AGMNPSAIQA (80 aa)) form a DNA-binding region, nuclear receptor. NR C4-type zinc fingers lie at residues 53–73 (CKVCRHSATGYHYDVPSCNGC) and 89–112 (CLKMRKCLSGTEPVDLSRRMCRAC). Residues 194 to 430 (RDIRKLDELI…RYTRISNLYE (237 aa)) enclose the NR LBD domain.

It belongs to the nuclear hormone receptor family.

The protein resides in the nucleus. Functionally, orphan nuclear receptor. The sequence is that of Nuclear hormone receptor family member nhr-136 (nhr-136) from Caenorhabditis elegans.